We begin with the raw amino-acid sequence, 433 residues long: Mitochondrial distribution and morphology protein 12 (433 aa).

Positions 1–433 (MSIDIDWERA…VYPSFWTFLI (433 aa)) constitute an SMP-LTD domain. Disordered regions lie at residues 62-113 (LSDP…GGQM), 180-279 (TPLG…RMRE), and 356-376 (GPET…SPRR). The segment covering 81-96 (SEERSPTREPVDRYGN) has biased composition (basic and acidic residues). Over residues 214–236 (SAQSRPSTANTGNTLPSRDSMSV) the composition is skewed to polar residues. Residues 268 to 279 (PLDDTPPRRMRE) show a composition bias toward basic and acidic residues.

The protein belongs to the MDM12 family. In terms of assembly, component of the ER-mitochondria encounter structure (ERMES) or MDM complex, composed of MMM1, MDM10, MDM12 and MDM34. An MMM1 homodimer associates with one molecule of MDM12 on each side in a pairwise head-to-tail manner, and the SMP-LTD domains of MMM1 and MDM12 generate a continuous hydrophobic tunnel for phospholipid trafficking.

Its subcellular location is the mitochondrion outer membrane. It localises to the endoplasmic reticulum membrane. In terms of biological role, component of the ERMES/MDM complex, which serves as a molecular tether to connect the endoplasmic reticulum (ER) and mitochondria. Components of this complex are involved in the control of mitochondrial shape and protein biogenesis, and function in nonvesicular lipid trafficking between the ER and mitochondria. MDM12 is required for the interaction of the ER-resident membrane protein MMM1 and the outer mitochondrial membrane-resident beta-barrel protein MDM10. The MDM12-MMM1 subcomplex functions in the major beta-barrel assembly pathway that is responsible for biogenesis of all mitochondrial outer membrane beta-barrel proteins, and acts in a late step after the SAM complex. The MDM10-MDM12-MMM1 subcomplex further acts in the TOM40-specific pathway after the action of the MDM12-MMM1 complex. Essential for establishing and maintaining the structure of mitochondria and maintenance of mtDNA nucleoids. The chain is Mitochondrial distribution and morphology protein 12 from Ajellomyces capsulatus (strain NAm1 / WU24) (Darling's disease fungus).